Here is a 1036-residue protein sequence, read N- to C-terminus: Cellulose synthase-like protein D1 (1036 aa).

Positions 1–99 (MASSPPKKTL…GGGDGPKMGN (99 aa)) are disordered. Polar residues-rich tracts occupy residues 9-19 (TLNSQSSSLSR) and 69-80 (NQPAGSSGSTSE). Gly residues predominate over residues 86 to 95 (NRGGGGGDGP). A run of 2 helical transmembrane segments spans residues 178 to 198 (ILSP…FFLW) and 208 to 228 (AMWL…SWIL). D308 is an active-site residue. Residues 626–665 (AMHVRTQSQASQTSQASDLESDTQPLNDDPDLGLPKKFGN) form a disordered region. The segment covering 631 to 642 (TQSQASQTSQAS) has biased composition (low complexity). D741 is a catalytic residue. Transmembrane regions (helical) follow at residues 817 to 837 (IYPF…LCLF), 848 to 868 (IHFL…SLLE), 895 to 915 (LAAV…SFTL), 938 to 958 (GLFI…VIGA), 962 to 982 (IYSV…SLWV), and 1002 to 1022 (TIVY…WITI).

The protein belongs to the glycosyltransferase 2 family. Plant cellulose synthase-like D subfamily.

The protein resides in the golgi apparatus membrane. Thought to be a Golgi-localized beta-glycan synthase that polymerize the backbones of noncellulosic polysaccharides (hemicelluloses) of plant cell wall. This chain is Cellulose synthase-like protein D1 (CSLD1), found in Arabidopsis thaliana (Mouse-ear cress).